The chain runs to 111 residues: MEAKAIAKYVRMSPMKVKIVLDLIRGKNVNEAFAILQYTPKDAAVVINKVLKSAVANAENNFNLDGNRLYVSEAYAGQGPTLKRFQPHAQGRAFSIKKRSSHITVIVKERD.

This sequence belongs to the universal ribosomal protein uL22 family. Part of the 50S ribosomal subunit.

Its function is as follows. This protein binds specifically to 23S rRNA; its binding is stimulated by other ribosomal proteins, e.g. L4, L17, and L20. It is important during the early stages of 50S assembly. It makes multiple contacts with different domains of the 23S rRNA in the assembled 50S subunit and ribosome. Functionally, the globular domain of the protein is located near the polypeptide exit tunnel on the outside of the subunit, while an extended beta-hairpin is found that lines the wall of the exit tunnel in the center of the 70S ribosome. This is Large ribosomal subunit protein uL22 from Clostridium acetobutylicum (strain ATCC 824 / DSM 792 / JCM 1419 / IAM 19013 / LMG 5710 / NBRC 13948 / NRRL B-527 / VKM B-1787 / 2291 / W).